Reading from the N-terminus, the 345-residue chain is High mobility group protein 20A (345 aa).

Disordered stretches follow at residues 1-130 (MEST…PFPE) and 166-206 (QKYQ…EKES). Polar residues-rich tracts occupy residues 22–38 (NNQPPFCGTTVSGSSQA) and 57–67 (LHQSGEQQLGN). The span at 80–94 (ARRGGWNKGRKRKRS) shows a compositional bias: basic residues. The segment at residues 101-169 (PKAPLTGYVR…RYTKELQKYQ (69 aa)) is a DNA-binding region (HMG box). Residues 112 to 125 (MNERREQLRTERPD) are compositionally biased toward basic and acidic residues. The segment covering 167 to 178 (KYQNTDAYQTYS) has biased composition (polar residues). A compositionally biased stretch (basic residues) spans 179–189 (RKAKSRQKGRQ). A coiled-coil region spans residues 227 to 285 (SKAREAELRQLRKSNMEFEERNAALQKHVESMRSAVQRLEAELSQEHERNSLLQQHLQS).

Its subcellular location is the nucleus. Its function is as follows. Plays a role in neuronal differentiation. This Xenopus laevis (African clawed frog) protein is High mobility group protein 20A (hmg20a).